The primary structure comprises 294 residues: Phosphatidylglycerol--prolipoprotein diacylglyceryl transferase (294 aa).

7 consecutive transmembrane segments (helical) span residues Val-10 to Phe-30, Leu-55 to Tyr-75, Trp-91 to Phe-111, Ala-119 to Ile-139, Pro-196 to Tyr-216, Met-224 to Phe-244, and Trp-258 to Ile-278. Arg-138 lines the a 1,2-diacyl-sn-glycero-3-phospho-(1'-sn-glycerol) pocket.

This sequence belongs to the Lgt family.

It is found in the cell inner membrane. It catalyses the reaction L-cysteinyl-[prolipoprotein] + a 1,2-diacyl-sn-glycero-3-phospho-(1'-sn-glycerol) = an S-1,2-diacyl-sn-glyceryl-L-cysteinyl-[prolipoprotein] + sn-glycerol 1-phosphate + H(+). It participates in protein modification; lipoprotein biosynthesis (diacylglyceryl transfer). Functionally, catalyzes the transfer of the diacylglyceryl group from phosphatidylglycerol to the sulfhydryl group of the N-terminal cysteine of a prolipoprotein, the first step in the formation of mature lipoproteins. In Psychrobacter arcticus (strain DSM 17307 / VKM B-2377 / 273-4), this protein is Phosphatidylglycerol--prolipoprotein diacylglyceryl transferase.